Consider the following 503-residue polypeptide: N-fatty-acyl-amino acid synthase/hydrolase PM20D1 (503 aa).

A signal peptide spans 1–24; the sequence is MAELLASLPAWAAVLLLFFATVSG. Asparagine 72 carries N-linked (GlcNAc...) asparagine glycosylation. Position 125 (histidine 125) interacts with Zn(2+). Aspartate 127 is an active-site residue. A Zn(2+)-binding site is contributed by aspartate 157. Glutamate 191 functions as the Proton acceptor in the catalytic mechanism. Glutamate 192 and aspartate 218 together coordinate Zn(2+). A glycan (N-linked (GlcNAc...) asparagine) is linked at asparagine 443. Histidine 465 contributes to the Zn(2+) binding site.

Belongs to the peptidase M20A family. Requires Zn(2+) as cofactor. In addition to being detected in blood (at protein level), PM20D1 is also highly expressed in other tissues including brown adipocytes, liver and kidney. It is also expressed in small intestine, large intestine, heart and pancreas.

The protein resides in the secreted. The catalysed reaction is an N-acyl-L-amino acid + H2O = an L-alpha-amino acid + a carboxylate. It carries out the reaction an N-acyl-aromatic L-alpha-amino acid + H2O = an aromatic L-alpha-amino acid + a carboxylate. The enzyme catalyses N-(5Z,8Z,11Z,14Z)-eicosatetraenoyl-glycine + H2O = (5Z,8Z,11Z,14Z)-eicosatetraenoate + glycine. It catalyses the reaction N-hexadecanoyl-L-phenylalanine + H2O = hexadecanoate + L-phenylalanine. The catalysed reaction is N-octadecanoyl-L-phenylalanine + H2O = octadecanoate + L-phenylalanine. It carries out the reaction N-(4Z,7Z,10Z,13Z,16Z,19Z-docosahexaenoyl)-L-phenylalanine + H2O = (4Z,7Z,10Z,13Z,16Z,19Z)-docosahexaenoate + L-phenylalanine. The enzyme catalyses N-(9Z-octadecenoyl)-L-asparagine + H2O = L-asparagine + (9Z)-octadecenoate. It catalyses the reaction (9Z)-octadecenoate + glycine = N-(9Z-octadecenoyl)glycine + H2O. The catalysed reaction is N-(9Z-octadecenoyl)-L-lysine + H2O = L-lysine + (9Z)-octadecenoate. It carries out the reaction N-(9Z-octadecenoyl)-L-methionine + H2O = (9Z)-octadecenoate + L-methionine. The enzyme catalyses N-(9Z-octadecenoyl)-L-serine + H2O = L-serine + (9Z)-octadecenoate. It catalyses the reaction N-(9Z-octadecenoyl)-L-tryptophan + H2O = L-tryptophan + (9Z)-octadecenoate. The catalysed reaction is N-(9Z-octadecenoyl)-L-tyrosine + H2O = L-tyrosine + (9Z)-octadecenoate. It carries out the reaction N-(9Z-octadecenoyl)-L-glutamine + H2O = L-glutamine + (9Z)-octadecenoate. The enzyme catalyses N-(5Z,8Z,11Z,14Z-eicosatetraenoyl)-L-serine + H2O = (5Z,8Z,11Z,14Z)-eicosatetraenoate + L-serine. It catalyses the reaction (5Z,8Z,11Z,14Z)-eicosatetraenoate + L-phenylalanine = N-(5Z,8Z,11Z,14Z-eicosatetraenoyl)-L-phenylalanine + H2O. The catalysed reaction is N-(9Z-octadecenoyl)-L-leucine + H2O = L-leucine + (9Z)-octadecenoate. It carries out the reaction L-phenylalanine + (9Z)-octadecenoate = N-(9Z-octadecenoyl)-L-phenylalanine + H2O. It functions in the pathway amino-acid metabolism. Its pathway is energy metabolism; electron transfer. It participates in lipid metabolism; fatty acid metabolism. Its activity is regulated as follows. Lipoproteins are powerful coactivators of PM20D1 activity in vitro and NAA biosynthesis in vivo. Functionally, secreted enzyme that regulates the endogenous N-fatty acyl amino acid (NAAs) tissue and circulating levels by functioning as a bidirectional NAA synthase/hydrolase. It condenses free fatty acids and free amino acids to generate NAAs and bidirectionally catalyzes the reverse hydrolysis reaction. Some of these NAAs stimulate oxidative metabolism via mitochondrial uncoupling, increasing energy expenditure in a UPC1-independent manner. Thereby, this secreted protein may indirectly regulate whole body energy expenditure. PM20D1 circulates in tight association with both low- and high-density (LDL and HDL,respectively) lipoprotein particles. This is N-fatty-acyl-amino acid synthase/hydrolase PM20D1 from Mus musculus (Mouse).